A 478-amino-acid chain; its full sequence is Cytochrome c-552 (478 aa).

An N-terminal signal peptide occupies residues 1-26 (MARKTLRARRFFSLIFPFFFITSVYA). His-94 serves as a coordination point for heme c. Residues Cys-122, Cys-125, and Lys-126 each contribute to the heme site. Residues Cys-160, Cys-163, His-164, Cys-209, Cys-212, and His-213 each contribute to the heme c site. Ca(2+)-binding residues include Glu-215, Tyr-216, Lys-261, and Gln-263. Substrate is bound at residue Tyr-216. His-264 is a binding site for substrate. Positions 275, 282, 285, 286, 301, 314, 317, 318, and 393 each coordinate heme c.

This sequence belongs to the cytochrome c-552 family. It depends on Ca(2+) as a cofactor. Heme c is required as a cofactor.

The protein resides in the periplasm. The enzyme catalyses 6 Fe(III)-[cytochrome c] + NH4(+) + 2 H2O = 6 Fe(II)-[cytochrome c] + nitrite + 8 H(+). Its pathway is nitrogen metabolism; nitrate reduction (assimilation). Catalyzes the reduction of nitrite to ammonia, consuming six electrons in the process. In Salmonella agona (strain SL483), this protein is Cytochrome c-552.